Consider the following 295-residue polypeptide: HTH-type transcriptional regulator TdfR (295 aa).

One can recognise an HTH lysR-type domain in the interval 1–58 (MEFRQLRYFVAAAEEGNVGAAARRLHISQPPVTRQIHALEQHLGVLLFERSARGVQLT). A DNA-binding region (H-T-H motif) is located at residues 18 to 37 (VGAAARRLHISQPPVTRQIH).

This sequence belongs to the LysR transcriptional regulatory family.

It is found in the cytoplasm. Functionally, involved in the regulation of 3-chlorocatechol degradation. Transcriptional regulator of tfdB expression. Acts as a repressor in the absence of its effector (either 2-cis-chlorodiene lactone or chloromaleylacetate) but acts as an activator when its effector is present. This chain is HTH-type transcriptional regulator TdfR (tfdR), found in Cupriavidus pinatubonensis (strain JMP 134 / LMG 1197) (Cupriavidus necator (strain JMP 134)).